The primary structure comprises 475 residues: Ribulose bisphosphate carboxylase large chain (475 aa).

The propeptide occupies 1-2 (MS). Proline 3 is subject to N-acetylproline. Lysine 14 is modified (N6,N6,N6-trimethyllysine). 2 residues coordinate substrate: asparagine 123 and threonine 173. Lysine 175 functions as the Proton acceptor in the catalytic mechanism. Lysine 177 is a binding site for substrate. Positions 201, 203, and 204 each coordinate Mg(2+). Residue lysine 201 is modified to N6-carboxylysine. Histidine 294 functions as the Proton acceptor in the catalytic mechanism. Substrate contacts are provided by arginine 295, histidine 327, and serine 379.

The protein belongs to the RuBisCO large chain family. Type I subfamily. Heterohexadecamer of 8 large chains and 8 small chains; disulfide-linked. The disulfide link is formed within the large subunit homodimers. Mg(2+) is required as a cofactor. The disulfide bond which can form in the large chain dimeric partners within the hexadecamer appears to be associated with oxidative stress and protein turnover.

It is found in the plastid. Its subcellular location is the chloroplast. The catalysed reaction is 2 (2R)-3-phosphoglycerate + 2 H(+) = D-ribulose 1,5-bisphosphate + CO2 + H2O. It catalyses the reaction D-ribulose 1,5-bisphosphate + O2 = 2-phosphoglycolate + (2R)-3-phosphoglycerate + 2 H(+). Its function is as follows. RuBisCO catalyzes two reactions: the carboxylation of D-ribulose 1,5-bisphosphate, the primary event in carbon dioxide fixation, as well as the oxidative fragmentation of the pentose substrate in the photorespiration process. Both reactions occur simultaneously and in competition at the same active site. This chain is Ribulose bisphosphate carboxylase large chain, found in Plumbago auriculata (Cape leadwort).